Here is a 115-residue protein sequence, read N- to C-terminus: NAD(P)H-quinone oxidoreductase subunit M (115 aa).

It belongs to the complex I NdhM subunit family. As to quaternary structure, NDH-1 can be composed of about 15 different subunits; different subcomplexes with different compositions have been identified which probably have different functions.

It localises to the cellular thylakoid membrane. The catalysed reaction is a plastoquinone + NADH + (n+1) H(+)(in) = a plastoquinol + NAD(+) + n H(+)(out). It carries out the reaction a plastoquinone + NADPH + (n+1) H(+)(in) = a plastoquinol + NADP(+) + n H(+)(out). Functionally, NDH-1 shuttles electrons from an unknown electron donor, via FMN and iron-sulfur (Fe-S) centers, to quinones in the respiratory and/or the photosynthetic chain. The immediate electron acceptor for the enzyme in this species is believed to be plastoquinone. Couples the redox reaction to proton translocation, and thus conserves the redox energy in a proton gradient. Cyanobacterial NDH-1 also plays a role in inorganic carbon-concentration. This Prochlorococcus marinus (strain MIT 9313) protein is NAD(P)H-quinone oxidoreductase subunit M.